We begin with the raw amino-acid sequence, 546 residues long: Casein kinase I homolog 2 (546 aa).

2 stretches are compositionally biased toward polar residues: residues 1 to 33 (MSQVQSPLTATNSGLAVNNNTMNSQMPNRSNVR) and 44 to 55 (HVSSNLNHNTGN). The interval 1 to 67 (MSQVQSPLTA…ASYSGSQSRD (67 aa)) is disordered. An N-acetylserine modification is found at Ser2. Residues 76 to 360 (YKIGKKIGEG…ETADGQYDWM (285 aa)) form the Protein kinase domain. Residues 82–90 (IGEGSFGVL) and Lys105 contribute to the ATP site. Asp195 serves as the catalytic Proton acceptor. Disordered regions lie at residues 373 to 425 (NKKP…QAQA) and 443 to 546 (QQAN…LGCC). Residues 412-425 (QQQQQQQAQAQAQA) show a composition bias toward low complexity. A compositionally biased stretch (basic and acidic residues) spans 453 to 465 (DDSHYDEEREASK). Ser455 carries the phosphoserine modification. A Glycyl lysine isopeptide (Lys-Gly) (interchain with G-Cter in ubiquitin) cross-link involves residue Lys465. Over residues 475-496 (QQQTQQKYAQQQQKQMQQKSKQ) the composition is skewed to low complexity. The span at 497-530 (FANTGANGQTNKYPYNAQPTANDEQNAKNAAQDR) shows a compositional bias: polar residues. Positions 533–546 (NKSSKGFFSKLGCC) are enriched in low complexity. S-palmitoyl cysteine attachment occurs at residues Cys545 and Cys546.

This sequence belongs to the protein kinase superfamily. CK1 Ser/Thr protein kinase family. Casein kinase I subfamily. Palmitoylated by AKR1, which is required for proper plasma membrane localization of YCK2.

It localises to the cell membrane. The catalysed reaction is L-seryl-[protein] + ATP = O-phospho-L-seryl-[protein] + ADP + H(+). It carries out the reaction L-threonyl-[protein] + ATP = O-phospho-L-threonyl-[protein] + ADP + H(+). Functionally, casein kinases are operationally defined by their preferential utilization of acidic proteins such as caseins as substrates. In Saccharomyces cerevisiae (strain ATCC 204508 / S288c) (Baker's yeast), this protein is Casein kinase I homolog 2 (YCK2).